Here is a 165-residue protein sequence, read N- to C-terminus: Glycine cleavage system H protein, mitochondrial (165 aa).

The N-terminal 31 residues, 1 to 31 (MALRIWASSTAKALRLSSASRPHFSPLFRCF), are a transit peptide targeting the mitochondrion. The Lipoyl-binding domain occupies 55 to 137 (VATIGITDHA…YEDGWMIKVK (83 aa)). Lys-96 is subject to N6-lipoyllysine.

This sequence belongs to the GcvH family. As to quaternary structure, the glycine cleavage system is composed of four components that only loosely associate: the P protein (EC 1.4.4.2), the T protein (EC 2.1.2.10), the L protein (EC 1.8.1.4) and the lipoyl-bearing H protein. Requires (R)-lipoate as cofactor. In terms of tissue distribution, expressed in roots, stems and leaves.

The protein resides in the mitochondrion. Functionally, the glycine cleavage system catalyzes the degradation of glycine. The H protein shuttles the methylamine group of glycine from the P protein to the T protein. This chain is Glycine cleavage system H protein, mitochondrial (GDCSH), found in Flaveria trinervia (Clustered yellowtops).